The following is a 290-amino-acid chain: Shikimate dehydrogenase (NADP(+)) (290 aa).

Residues 24-26 (SKS) and T71 contribute to the shikimate site. Catalysis depends on K75, which acts as the Proton acceptor. Shikimate is bound by residues N96 and D111. Residues 135–139 (GAGGA), 159–164 (NRTKQR), and I228 contribute to the NADP(+) site. Y230 contacts shikimate. Residue G251 participates in NADP(+) binding.

This sequence belongs to the shikimate dehydrogenase family. In terms of assembly, homodimer.

The catalysed reaction is shikimate + NADP(+) = 3-dehydroshikimate + NADPH + H(+). It functions in the pathway metabolic intermediate biosynthesis; chorismate biosynthesis; chorismate from D-erythrose 4-phosphate and phosphoenolpyruvate: step 4/7. In terms of biological role, involved in the biosynthesis of the chorismate, which leads to the biosynthesis of aromatic amino acids. Catalyzes the reversible NADPH linked reduction of 3-dehydroshikimate (DHSA) to yield shikimate (SA). The sequence is that of Shikimate dehydrogenase (NADP(+)) from Bartonella tribocorum (strain CIP 105476 / IBS 506).